Consider the following 1513-residue polypeptide: Lid2 complex component lid2 (1513 aa).

The JmjN domain maps to 56–97; the sequence is GLSVQLNASNMTDPFKFLLDNWHTIFKNGAIKLLPPEGWQIP. The region spanning 121-212 is the ARID domain; that stretch reads YEKNYDYFKK…YIKPFERDSS (92 aa). The disordered stretch occupies residues 211-253; sequence SSPSFKSKRSESSTRKIRNTRSSAQQESPIPETSAQSPVQTIQ. The segment covering 230-253 has biased composition (polar residues); it reads TRSSAQQESPIPETSAQSPVQTIQ. The PHD-type 1 zinc finger occupies 268–318; that stretch reads GEQCEYCGLDKNPETILLCDGCEAAYHTSCLDPPLTSIPKEDWYCDACKFN. A JmjC domain is found at 408–574; that stretch reads KYSSEPWNLH…DGLLNSSISV (167 aa). Phosphoserine is present on Ser-722. The tract at residues 1063–1086 is disordered; it reads LSLNDRPGPPMEPASRETSPDSEG. A compositionally biased stretch (basic and acidic residues) spans 1076–1086; that stretch reads ASRETSPDSEG. The PHD-type 2 zinc-finger motif lies at 1093 to 1145; the sequence is KKGCIFCFCRLPESGVMIECEICHEWYHAKCLKMSKKKLRQDEKFTCPICDYR. The RING-type 1; degenerate zinc finger occupies 1096–1143; the sequence is CIFCFCRLPESGVMIECEICHEWYHAKCLKMSKKKLRQDEKFTCPICD. Disordered stretches follow at residues 1244–1268 and 1280–1327; these read APNP…RQRQ and ASAI…NNKN. Residues 1257 to 1268 are compositionally biased toward basic residues; sequence TRKPRPTKRQRQ. The span at 1301 to 1313 shows a compositional bias: basic and acidic residues; that stretch reads VEAETKSKSEKSP. The span at 1316-1326 shows a compositional bias: polar residues; sequence NGTNISDANNK. The segment at 1352–1403 adopts a PHD-type 3 zinc-finger fold; sequence NSSCLCGEEFSPRDSFIDCTICERRFHYDCVGLNNEIADSVSKFTCPICMEQ. The segment at 1354–1401 adopts an RING-type 2; degenerate zinc-finger fold; that stretch reads SCLCGEEFSPRDSFIDCTICERRFHYDCVGLNNEIADSVSKFTCPICM.

In terms of assembly, component of the Lid2 complex composed of ash2, jmj3, lid2, sdc1 and snt2.

It is found in the nucleus. The protein is Lid2 complex component lid2 (lid2) of Schizosaccharomyces pombe (strain 972 / ATCC 24843) (Fission yeast).